The following is a 66-amino-acid chain: Large ribosomal subunit protein bL35 (66 aa).

The protein belongs to the bacterial ribosomal protein bL35 family.

The sequence is that of Large ribosomal subunit protein bL35 from Treponema pallidum (strain Nichols).